Consider the following 575-residue polypeptide: DNA polymerase lambda (575 aa).

One can recognise a BRCT domain in the interval 36–132 (EAEEWLSSLR…RLVDVAGFSI (97 aa)). The segment at 160-205 (ALLQTALPPPPSPTRPVSPPQKTKEAPNTQAQPISDDEASDGEETQ) is disordered. Pro residues predominate over residues 166-178 (LPPPPSPTRPVSP). The span at 194–203 (SDDEASDGEE) shows a compositional bias: acidic residues. Positions 265–279 (KAYSVQGDKWRALGY) are DNA-binding. Lys312 functions as the Schiff-base intermediate with DNA in the catalytic mechanism. The DNA-binding stretch occupies residues 345-348 (GTKT). DCTP is bound by residues Arg386, 417–420 (SYRR), and 426–429 (GDVD). Positions 420 to 429 (RGKATCGDVD) are involved in primer binding. Mn(2+)-binding residues include Asp427, Asp429, and Asp490. Positions 466 to 505 (ENGQQQKYLGVCRLPGPGWRHRRLDIIVVPYSEFACALLY) are DNA-binding. A dCTP-binding site is contributed by Asn513.

Belongs to the DNA polymerase type-X family. As to quaternary structure, interacts with PCNA. Interacts with PAXX; promoting POLL recruitment to double-strand breaks (DSBs) and stimulation of the end-filling activity of POLL. Interacts with XRCC4; promoting POLL recruitment to double-strand breaks (DSBs) and stimulation of the end-filling activity of POLL. Interacts with NHEJ1/XLF; promoting POLL recruitment to double-strand breaks (DSBs) and stimulation of the end-filling activity of POLL. Mn(2+) is required as a cofactor.

Its subcellular location is the nucleus. The catalysed reaction is DNA(n) + a 2'-deoxyribonucleoside 5'-triphosphate = DNA(n+1) + diphosphate. Functionally, DNA polymerase that functions in several pathways of DNA repair. Involved in base excision repair (BER) responsible for repair of lesions that give rise to abasic (AP) sites in DNA. Also contributes to DNA double-strand break repair by non-homologous end joining and homologous recombination. Has both template-dependent and template-independent (terminal transferase) DNA polymerase activities. Also has a 5'-deoxyribose-5-phosphate lyase (dRP lyase) activity. The protein is DNA polymerase lambda of Macaca fascicularis (Crab-eating macaque).